We begin with the raw amino-acid sequence, 521 residues long: Glutamyl-tRNA(Gln) amidotransferase subunit A (521 aa).

Active-site charge relay system residues include Lys79 and Ser187. The Acyl-ester intermediate role is filled by Ser211.

It belongs to the amidase family. GatA subfamily. As to quaternary structure, heterotrimer of A, B and C subunits.

The enzyme catalyses L-glutamyl-tRNA(Gln) + L-glutamine + ATP + H2O = L-glutaminyl-tRNA(Gln) + L-glutamate + ADP + phosphate + H(+). In terms of biological role, allows the formation of correctly charged Gln-tRNA(Gln) through the transamidation of misacylated Glu-tRNA(Gln) in organisms which lack glutaminyl-tRNA synthetase. The reaction takes place in the presence of glutamine and ATP through an activated gamma-phospho-Glu-tRNA(Gln). The protein is Glutamyl-tRNA(Gln) amidotransferase subunit A of Mesorhizobium japonicum (strain LMG 29417 / CECT 9101 / MAFF 303099) (Mesorhizobium loti (strain MAFF 303099)).